A 340-amino-acid polypeptide reads, in one-letter code: MASQIAQLLEKALHFWNAVPQPLQYTFAALGALYVLRGALSFVRLLLNSFILSGPNLRKYGKKGTWAVVTGASDGLGKEFASQLASKGFNLVLVSRTQSKLDALAKELRLKWSGLETKVLAMDFSQDNDEDYERLAKLIAGLDVGILINNVGQSHSIPVSFLDTEKTELQSIVTINCLGTLKTTKVVAPILAARKKGLILTMGSFAGTMPTPYLATYSGSKAFLQHWSSSLASELAPHGVDVQFVISYLVTTAMSKVRRTSLLIPGPKQFVKAALGKIGLDSNENFPNTYTPWWSHNVFKWIIDSTVGNTSAFTIWQNRKMHVDIRNRALRKAAREAKKQ.

The chain crosses the membrane as a helical span at residues 23–43 (LQYTFAALGALYVLRGALSFV). NADP(+) is bound by residues Val68, Arg109, Asp123, Asp131, Asn150, Lys185, Tyr217, Lys221, Val250, and Thr252. The active-site Proton donor is the Tyr217. Lys221 (lowers pKa of active site Tyr) is an active-site residue.

The protein belongs to the short-chain dehydrogenases/reductases (SDR) family.

The protein resides in the endoplasmic reticulum membrane. It catalyses the reaction a very-long-chain (3R)-3-hydroxyacyl-CoA + NADP(+) = a very-long-chain 3-oxoacyl-CoA + NADPH + H(+). Its pathway is lipid metabolism; fatty acid biosynthesis. In terms of biological role, component of the microsomal membrane bound fatty acid elongation system, which produces the 26-carbon very long-chain fatty acids (VLCFA) from palmitate. Catalyzes the reduction of the 3-ketoacyl-CoA intermediate that is formed in each cycle of fatty acid elongation. VLCFAs serve as precursors for ceramide and sphingolipids. This chain is Very-long-chain 3-oxoacyl-CoA reductase, found in Podospora anserina (strain S / ATCC MYA-4624 / DSM 980 / FGSC 10383) (Pleurage anserina).